Consider the following 275-residue polypeptide: Myb/SANT-like DNA-binding domain-containing protein 3 (275 aa).

The Myb-like domain maps to 13 to 78; the sequence is FSELEKSILL…QLKKCWENIK (66 aa). 2 positions are modified to phosphoserine: serine 96 and serine 98. Lysine 154 is covalently cross-linked (Glycyl lysine isopeptide (Lys-Gly) (interchain with G-Cter in SUMO2)). Residues 211–247 are a coiled coil; the sequence is QLIQMNEVHVAKIQQIERECEMAEEEHRIKMEVLNKK. The residue at position 274 (serine 274) is a Phosphoserine.

Belongs to the MSANTD3 family.

The sequence is that of Myb/SANT-like DNA-binding domain-containing protein 3 (MSANTD3) from Bos taurus (Bovine).